Here is a 467-residue protein sequence, read N- to C-terminus: MASLQFHGNVDADIRYDISLDPARESNLFRLLMGLQLANGTKPSPRLPKWWPKRLEMIGKVLPKAYCSMVIFTSLHLGVLFTKTTLDVLPTGELQAITDALTMTIIYFFTGYGTIYWCLRSRRLLAYMEHMNREYRHHSLAGVTFVSSHAAFRMSRNFTVVWIMSCLLGVISWGVSPLMLGIRMLPLQCWYPFDALGPGTYTAVYATQLFGQIMVGMTFGFGGSLFVTLSLLLLGQFDVLYCSLKNLDAHTKLLGGESVNGLSSLQEELLLGDSKRELNQYVLLQEHPTDLLRLSAGRKCPDQGNAFHNALVECIRLHRFILHCSQELENLFSPYCLVKSLQITFQLCLLVFVGVSGTREVLRIVNQLQYLGLTIFELLMFTYCGELLSRHSIRSGDAFWRGAWWKHAHFIRQDILIFLVNSRRAVHVTAGKFYVMDVNRLRSVITQAFSFLTLLQKLAAKKTESEL.

The Cytoplasmic portion of the chain corresponds to 1 to 60 (MASLQFHGNVDADIRYDISLDPARESNLFRLLMGLQLANGTKPSPRLPKWWPKRLEMIGK). Residues 61 to 81 (VLPKAYCSMVIFTSLHLGVLF) traverse the membrane as a helical segment. Residues 82-98 (TKTTLDVLPTGELQAIT) lie on the Extracellular side of the membrane. The chain crosses the membrane as a helical span at residues 99–119 (DALTMTIIYFFTGYGTIYWCL). The Cytoplasmic segment spans residues 120–159 (RSRRLLAYMEHMNREYRHHSLAGVTFVSSHAAFRMSRNFT). The chain crosses the membrane as a helical span at residues 160-180 (VVWIMSCLLGVISWGVSPLML). Topologically, residues 181-212 (GIRMLPLQCWYPFDALGPGTYTAVYATQLFGQ) are extracellular. A helical membrane pass occupies residues 213 to 233 (IMVGMTFGFGGSLFVTLSLLL). Topologically, residues 234 to 286 (LGQFDVLYCSLKNLDAHTKLLGGESVNGLSSLQEELLLGDSKRELNQYVLLQE) are cytoplasmic. A helical transmembrane segment spans residues 287 to 307 (HPTDLLRLSAGRKCPDQGNAF). At 308–334 (HNALVECIRLHRFILHCSQELENLFSP) the chain is on the extracellular side. Residues 335–355 (YCLVKSLQITFQLCLLVFVGV) form a helical membrane-spanning segment. Over 356 to 367 (SGTREVLRIVNQ) the chain is Cytoplasmic. The chain crosses the membrane as a helical span at residues 368-388 (LQYLGLTIFELLMFTYCGELL). The Extracellular portion of the chain corresponds to 389 to 467 (SRHSIRSGDA…LAAKKTESEL (79 aa)).

It belongs to the insect chemoreceptor superfamily. Heteromeric odorant receptor channel (TC 1.A.69) family. Or2a subfamily. As to quaternary structure, interacts with Orco. Complexes exist early in the endomembrane system in olfactory sensory neurons (OSNs), coupling these complexes to the conserved ciliary trafficking pathway. As to expression, expressed in 15% of the 120 sensory neurons within the maxillary palp.

Its subcellular location is the cell membrane. Functionally, odorant receptor which mediates acceptance or avoidance behavior, depending on its substrates. The odorant receptor repertoire encodes a large collection of odor stimuli that vary widely in identity, intensity, and duration. May form a complex with Orco to form odorant-sensing units, providing sensitive and prolonged odorant signaling and calcium permeability. This is Putative odorant receptor 85e (Or85e) from Drosophila melanogaster (Fruit fly).